We begin with the raw amino-acid sequence, 668 residues long: mRNA cap guanine-N(7) methyltransferase (668 aa).

Positions 1-19 (MYDPARDSWEERDGDEARS) are enriched in basic and acidic residues. Residues 1 to 281 (MYDPARDSWE…RAQVEEAMRA (281 aa)) form a disordered region. Over residues 44-65 (GENNNTTDLQQHPDPSSKTTAS) the composition is skewed to polar residues. Residues 73 to 88 (SQPAQPTTQTPPSVST) are compositionally biased toward low complexity. A compositionally biased stretch (polar residues) spans 100-129 (KASNPQSLTSTAQNQLNKSNTTMENTSGSA). Residues 133-142 (PRADPSDKPN) are compositionally biased toward basic and acidic residues. Residues 148-157 (ASPTDQNGSQ) are compositionally biased toward polar residues. Over residues 257-279 (LVDRETLRRRQEERERAQVEEAM) the composition is skewed to basic and acidic residues. In terms of domain architecture, mRNA cap 0 methyltransferase spans 310-668 (SKIKGLRSFN…FYHAFCFYKV (359 aa)). 319 to 320 (NN) contributes to the mRNA binding site. S-adenosyl-L-methionine is bound by residues K323, G366, D390, D428, 471-473 (MFT), and Y476. The interval 524–547 (ARQAQAKKEKSDEAPEDGEVEEDD) is disordered. The span at 537 to 547 (APEDGEVEEDD) shows a compositional bias: acidic residues.

It belongs to the class I-like SAM-binding methyltransferase superfamily. mRNA cap 0 methyltransferase family.

It is found in the nucleus. The catalysed reaction is a 5'-end (5'-triphosphoguanosine)-ribonucleoside in mRNA + S-adenosyl-L-methionine = a 5'-end (N(7)-methyl 5'-triphosphoguanosine)-ribonucleoside in mRNA + S-adenosyl-L-homocysteine. In terms of biological role, responsible for methylating the 5'-cap structure of mRNAs. This Aspergillus fumigatus (strain ATCC MYA-4609 / CBS 101355 / FGSC A1100 / Af293) (Neosartorya fumigata) protein is mRNA cap guanine-N(7) methyltransferase (abd1).